Here is a 392-residue protein sequence, read N- to C-terminus: LL-diaminopimelate aminotransferase (392 aa).

Residues tyrosine 15, glycine 40, lysine 104, tyrosine 128, and asparagine 178 each coordinate substrate. Residues 103 to 104 (SK), tyrosine 128, asparagine 178, tyrosine 209, and 237 to 239 (SVS) contribute to the pyridoxal 5'-phosphate site. Lysine 240 is modified (N6-(pyridoxal phosphate)lysine). Pyridoxal 5'-phosphate is bound at residue arginine 248. Arginine 366 serves as a coordination point for substrate.

The protein belongs to the class-I pyridoxal-phosphate-dependent aminotransferase family. LL-diaminopimelate aminotransferase subfamily. In terms of assembly, homodimer. Pyridoxal 5'-phosphate serves as cofactor.

It catalyses the reaction (2S,6S)-2,6-diaminopimelate + 2-oxoglutarate = (S)-2,3,4,5-tetrahydrodipicolinate + L-glutamate + H2O + H(+). It participates in amino-acid biosynthesis; L-lysine biosynthesis via DAP pathway; LL-2,6-diaminopimelate from (S)-tetrahydrodipicolinate (aminotransferase route): step 1/1. Involved in the synthesis of meso-diaminopimelate (m-DAP or DL-DAP), required for both lysine and peptidoglycan biosynthesis. Catalyzes the direct conversion of tetrahydrodipicolinate to LL-diaminopimelate. The sequence is that of LL-diaminopimelate aminotransferase from Desulforudis audaxviator (strain MP104C).